We begin with the raw amino-acid sequence, 67 residues long: Probable tautomerase bsl7456 (67 aa).

The active-site Proton acceptor; via imino nitrogen is the P2.

This sequence belongs to the 4-oxalocrotonate tautomerase family.

This chain is Probable tautomerase bsl7456, found in Bradyrhizobium diazoefficiens (strain JCM 10833 / BCRC 13528 / IAM 13628 / NBRC 14792 / USDA 110).